Consider the following 247-residue polypeptide: Ribosomal RNA small subunit methyltransferase G (247 aa).

S-adenosyl-L-methionine is bound by residues G84, F89, 136–137 (AE), and R155.

Belongs to the methyltransferase superfamily. RNA methyltransferase RsmG family.

The protein resides in the cytoplasm. Its function is as follows. Specifically methylates the N7 position of a guanine in 16S rRNA. The chain is Ribosomal RNA small subunit methyltransferase G from Prochlorococcus marinus (strain MIT 9313).